Here is a 495-residue protein sequence, read N- to C-terminus: Autoinducer 2 import ATP-binding protein LsrA (495 aa).

2 consecutive ABC transporter domains span residues 5 to 233 (IEAH…TPVS) and 256 to 494 (AQDF…FGGQ). ATP is bound at residue 37-44 (GGNGAGKS).

The protein belongs to the ABC transporter superfamily. AI-2 autoinducer porter (TC 3.A.1.2.8) family. The complex is composed of two ATP-binding proteins (LsrA), two transmembrane proteins (LsrC and LsrD) and a solute-binding protein (LsrB).

Its subcellular location is the cell inner membrane. It carries out the reaction ATP + H2O + (2R,4S)-2-methyl-2,3,3,4-tetrahydroxytetrahydrofuran-[AI-2-binding protein]Side 1 = ADP + phosphate + (2R,4S)-2-methyl-2,3,3,4-tetrahydroxytetrahydrofuranSide 2 + [AI-2-binding protein]Side 1.. Part of the ABC transporter complex LsrABCD involved in autoinducer 2 (AI-2) import. Responsible for energy coupling to the transport system. This Enterobacter sp. (strain 638) protein is Autoinducer 2 import ATP-binding protein LsrA (lsrA).